A 189-amino-acid chain; its full sequence is Elongation factor P (189 aa).

It belongs to the elongation factor P family.

It is found in the cytoplasm. It functions in the pathway protein biosynthesis; polypeptide chain elongation. In terms of biological role, involved in peptide bond synthesis. Stimulates efficient translation and peptide-bond synthesis on native or reconstituted 70S ribosomes in vitro. Probably functions indirectly by altering the affinity of the ribosome for aminoacyl-tRNA, thus increasing their reactivity as acceptors for peptidyl transferase. The chain is Elongation factor P from Pseudomonas fluorescens (strain Pf0-1).